The sequence spans 207 residues: Interleukin-6 (207 aa).

Positions 1 to 20 are cleaved as a signal peptide; sequence MNSLSTSAFSLGLLLVMATA. A disulfide bridge connects residues Cys-67 and Cys-73. At Ser-76 the chain carries Phosphoserine. The cysteines at positions 96 and 106 are disulfide-linked.

This sequence belongs to the IL-6 superfamily. In terms of assembly, component of a hexamer of two molecules each of IL6, IL6R and IL6ST; first binds to IL6R to associate with the signaling subunit IL6ST. Interacts with IL6R (via the N-terminal ectodomain); this interaction may be affected by IL6R-binding with SORL1, hence decreasing IL6 cis signaling. Interacts with SORL1 (via the N-terminal ectodomain); this interaction leads to IL6 internalization and lysosomal degradation. May form a trimeric complex with the soluble SORL1 ectodomain and soluble IL6R receptor; this interaction might stabilize circulating IL6, hence promoting IL6 trans signaling.

It is found in the secreted. In terms of biological role, cytokine with a wide variety of biological functions in immunity, tissue regeneration, and metabolism. Binds to IL6R, then the complex associates to the signaling subunit IL6ST/gp130 to trigger the intracellular IL6-signaling pathway. The interaction with the membrane-bound IL6R and IL6ST stimulates 'classic signaling', whereas the binding of IL6 and soluble IL6R to IL6ST stimulates 'trans-signaling'. Alternatively, 'cluster signaling' occurs when membrane-bound IL6:IL6R complexes on transmitter cells activate IL6ST receptors on neighboring receiver cells. Functionally, IL6 is a potent inducer of the acute phase response. Rapid production of IL6 contributes to host defense during infection and tissue injury, but excessive IL6 synthesis is involved in disease pathology. In the innate immune response, is synthesized by myeloid cells, such as macrophages and dendritic cells, upon recognition of pathogens through toll-like receptors (TLRs) at the site of infection or tissue injury. In the adaptive immune response, is required for the differentiation of B cells into immunoglobulin-secreting cells. Plays a major role in the differentiation of CD4(+) T cell subsets. Essential factor for the development of T follicular helper (Tfh) cells that are required for the induction of germinal-center formation. Required to drive naive CD4(+) T cells to the Th17 lineage. Also required for proliferation of myeloma cells and the survival of plasmablast cells. Acts as an essential factor in bone homeostasis and on vessels directly or indirectly by induction of VEGF, resulting in increased angiogenesis activity and vascular permeability. Induces, through 'trans-signaling' and synergistically with IL1B and TNF, the production of VEGF. Involved in metabolic controls, is discharged into the bloodstream after muscle contraction increasing lipolysis and improving insulin resistance. 'Trans-signaling' in central nervous system also regulates energy and glucose homeostasis. Mediates, through GLP-1, crosstalk between insulin-sensitive tissues, intestinal L cells and pancreatic islets to adapt to changes in insulin demand. Also acts as a myokine. Plays a protective role during liver injury, being required for maintenance of tissue regeneration. Also has a pivotal role in iron metabolism by regulating HAMP/hepcidin expression upon inflammation or bacterial infection. Through activation of IL6ST-YAP-NOTCH pathway, induces inflammation-induced epithelial regeneration. In Canis lupus familiaris (Dog), this protein is Interleukin-6 (IL6).